The chain runs to 457 residues: D(1B) dopamine receptor (457 aa).

Over 1 to 41 (MYQPFQHLDSDQVASWQSPEMLMNKSVSRESQRRKELVAGQ) the chain is Extracellular. An N-linked (GlcNAc...) asparagine glycan is attached at Asn-24. A helical transmembrane segment spans residues 42 to 67 (IVTGSLLLLLIFWTLFGNILVCTAVM). The Cytoplasmic portion of the chain corresponds to 68–78 (RFRHLRSRVTN). A helical transmembrane segment spans residues 79–105 (IFIVSLAVSDLLVALLVMPWKAVAEVA). Topologically, residues 106 to 114 (GHWPFGAFC) are extracellular. Cys-114 and Cys-199 are disulfide-bonded. The chain crosses the membrane as a helical span at residues 115–137 (DIWVAFDIMCSTASILNLCVISV). At 138–156 (DRYWAISSPFRYERKMTQR) the chain is on the cytoplasmic side. The helical transmembrane segment at 157–181 (VALLMISTAWALSVLISFIPVQLSW) threads the bilayer. The Extracellular segment spans residues 182–205 (HKSETEDHLLSNHSTGNCDSSLNR). A helical membrane pass occupies residues 206–231 (TYAISSSLISFYIPVAIMIVTYTRIY). Over 232–282 (RIAQIQIKRISTLERAAEHAQSCRSNRVDSCSRHHQTSLRTSIKKETKVLK) the chain is Cytoplasmic. Residues 283–309 (TLSIIMGVFVCCWLPFFILNCMVPFCD) form a helical membrane-spanning segment. Residues 310 to 326 (RSPGHPQAGLPCVSETT) lie on the Extracellular side of the membrane. The helical transmembrane segment at 327–351 (FDIFVWFGWANSSLNPIIYAFNADF) threads the bilayer. Residues 352–457 (RKVFSSLLGC…ITPSMSNGIH (106 aa)) lie on the Cytoplasmic side of the membrane. Cys-361 carries S-palmitoyl cysteine lipidation.

Belongs to the G-protein coupled receptor 1 family. Brain and kidney.

Its subcellular location is the cell membrane. Functionally, dopamine receptor whose activity is mediated by G proteins which activate adenylyl cyclase. The chain is D(1B) dopamine receptor (drd5) from Xenopus laevis (African clawed frog).